Reading from the N-terminus, the 262-residue chain is Serine/arginine-rich SC35-like splicing factor SCL30A (262 aa).

Disordered stretches follow at residues 1–38 (MRGRSYTPSPPRGYGRRGRSPSPRGRFGGSRDSDLPTS) and 115–262 (ENRK…SPSQ). Phosphoserine occurs at positions 9 and 20. The RRM domain maps to 37–115 (TSLLVRNLRH…RELTVVFAEE (79 aa)). Positions 115–140 (ENRKKPTEMRTRDRGGRSNRFQDRRR) are enriched in basic and acidic residues. Basic residues predominate over residues 150-161 (PPRRGRRSRSRS). S166, S174, S176, and S178 each carry phosphoserine. A compositionally biased stretch (basic and acidic residues) spans 180-190 (QDRRYEKERSY). 2 positions are modified to phosphoserine: S191 and S193. Basic residues predominate over residues 209 to 226 (VKSHSRSPRRSVSPRKNR). The span at 234–246 (RSQSPVPRQSRSP) shows a compositional bias: low complexity. Phosphoserine occurs at positions 235, 259, and 261.

The protein belongs to the splicing factor SR family. SCL subfamily. In terms of assembly, component of the spliceosome. Interacts with SNRNP35, CYP59 and RS2Z33.

It is found in the nucleus speckle. Involved in intron recognition and spliceosome assembly. Binds probably to multiple 5'-GAAG-3' repeats found in its third intron, suggesting autoregulation of alternative splicing. May be necessary for accurate splicing of the 3' region of introns. The protein is Serine/arginine-rich SC35-like splicing factor SCL30A (SCL30A) of Arabidopsis thaliana (Mouse-ear cress).